Consider the following 67-residue polypeptide: Large ribosomal subunit protein bL35 (67 aa).

Belongs to the bacterial ribosomal protein bL35 family.

In Zymomonas mobilis subsp. mobilis (strain ATCC 31821 / ZM4 / CP4), this protein is Large ribosomal subunit protein bL35.